The primary structure comprises 199 residues: Proteasome subunit beta type-2-B (199 aa).

Position 1 is an N-acetylmethionine (Met-1).

This sequence belongs to the peptidase T1B family. In terms of assembly, component of the 20S core complex of the 26S proteasome. The 26S proteasome is composed of a core protease (CP), known as the 20S proteasome, capped at one or both ends by the 19S regulatory particle (RP/PA700). The 20S proteasome core is composed of 28 subunits that are arranged in four stacked rings, resulting in a barrel-shaped structure. The two end rings are each formed by seven alpha subunits, and the two central rings are each formed by seven beta subunits. The catalytic chamber with the active sites is on the inside of the barrel. As to expression, ubiquitous low levels, higher expression in siliques and flowers.

The protein localises to the cytoplasm. The protein resides in the nucleus. Non-catalytic component of the proteasome, a multicatalytic proteinase complex which is characterized by its ability to cleave peptides with Arg, Phe, Tyr, Leu, and Glu adjacent to the leaving group at neutral or slightly basic pH. The proteasome has an ATP-dependent proteolytic activity. The polypeptide is Proteasome subunit beta type-2-B (PBD2) (Arabidopsis thaliana (Mouse-ear cress)).